The sequence spans 434 residues: Enolase (434 aa).

Phosphoenolpyruvate is bound at residue Ala41. Gln165 lines the (2R)-2-phosphoglycerate pocket. The Proton donor role is filled by Glu207. Mg(2+) is bound by residues Asp244, Glu291, and Asp318. Residues Lys343, Arg372, Ser373, and Lys394 each contribute to the phosphoenolpyruvate site. Positions 343, 372, 373, and 394 each coordinate (2R)-2-phosphoglycerate. Residue Lys343 is the Proton acceptor of the active site.

It belongs to the enolase family. In terms of assembly, homodimer and homooctamer; the homodimer is inactive. Mg(2+) is required as a cofactor.

It localises to the cytoplasm. It is found in the secreted. Its subcellular location is the cell surface. It catalyses the reaction (2R)-2-phosphoglycerate = phosphoenolpyruvate + H2O. It participates in carbohydrate degradation; glycolysis; pyruvate from D-glyceraldehyde 3-phosphate: step 4/5. Its function is as follows. Catalyzes the reversible conversion of 2-phosphoglycerate (2-PG) into phosphoenolpyruvate (PEP). It is essential for the degradation of carbohydrates via glycolysis. Functionally, 'Moonlights' as a laminin receptor. Binds laminin when expressed on the bacterial cell surface; this probably induces destruction of the extracellular matrix, favoring invasion and dissemination. The chain is Enolase from Staphylococcus aureus.